The following is a 247-amino-acid chain: 14-3-3 protein gamma (247 aa).

Met-1 is subject to N-acetylmethionine. Position 2 is an N-acetylvaline; in 14-3-3 protein gamma, N-terminally processed (Val-2). The tract at residues 2–247 (VDREQLVQKA…QDDDGGEGNN (246 aa)) is interaction with SPATA18/MIEAP. Ser-71 is modified (phosphoserine). Tyr-133 is modified (phosphotyrosine). Thr-145 carries the phosphothreonine modification. The residue at position 215 (Ser-215) is a Phosphoserine. Residue Thr-234 is modified to Phosphothreonine. Position 235 is a phosphoserine (Ser-235).

It belongs to the 14-3-3 family. As to quaternary structure, homodimer. Part of a complex that contains DSG3, PKP1, YAP1 and YWHAG; the complex is required for localization of DSG3 and YAP1 to the cell membrane in keratinocytes. Interacts with SAMSN1. Interacts with RAF1, SSH1 and CRTC2/TORC2. Interacts with ABL1 (phosphorylated form); the interaction retains it in the cytoplasm. Interacts with GAB2. Interacts with MDM4 (phosphorylated); negatively regulates MDM4 activity toward TP53. Interacts with PKA-phosphorylated AANAT and SIRT2. Interacts with the 'Thr-369' phosphorylated form of DAPK2. Interacts with PI4KB, TBC1D22A and TBC1D22B. Interacts with SLITRK1. Interacts with LRRK2; this interaction is dependent on LRRK2 phosphorylation. Interacts with MARK2 and MARK3. Interacts with MEFV. Interacts with ENDOG, TSC2 and PIK3C3; interaction with ENDOG weakens its interaction with TSC2 and PIK3C3. Interacts with (phosphorylated) WDR24. Interacts with BEST1; this interaction promotes L-glutamate channel activity leading to the positive regulation of NMDA glutamate receptor activity through the L-glutamate secretion. Interacts with PKP1 (when phosphorylated); the interaction results in translocation of PKP1 to the cytoplasm and loss of intercellular adhesion in keratinocytes. Interacts with SPATA18/MIEAP; a protein that also plays a role in MALM. Phosphorylated by various PKC isozymes.

It is found in the cytoplasm. It localises to the cytosol. The protein resides in the mitochondrion matrix. In terms of biological role, adapter protein implicated in the regulation of a large spectrum of both general and specialized signaling pathways. Binds to a large number of partners, usually by recognition of a phosphoserine or phosphothreonine motif. Binding generally results in the modulation of the activity of the binding partner. Promotes inactivation of WDR24 component of the GATOR2 complex by binding to phosphorylated WDR24. Participates in the positive regulation of NMDA glutamate receptor activity by promoting the L-glutamate secretion through interaction with BEST1. Reduces keratinocyte intercellular adhesion, via interacting with PKP1 and sequestering it in the cytoplasm, thereby reducing its incorporation into desmosomes. Plays a role in mitochondrial protein catabolic process (also named MALM) that promotes the degradation of damaged proteins inside mitochondria. The polypeptide is 14-3-3 protein gamma (Bos taurus (Bovine)).